The chain runs to 126 residues: Glycine cleavage system H protein (126 aa).

In terms of domain architecture, Lipoyl-binding spans Thr-24–Lys-105. N6-lipoyllysine is present on Lys-65.

The protein belongs to the GcvH family. As to quaternary structure, the glycine cleavage system is composed of four proteins: P, T, L and H. It depends on (R)-lipoate as a cofactor.

The glycine cleavage system catalyzes the degradation of glycine. The H protein shuttles the methylamine group of glycine from the P protein to the T protein. The sequence is that of Glycine cleavage system H protein from Burkholderia vietnamiensis (strain G4 / LMG 22486) (Burkholderia cepacia (strain R1808)).